The sequence spans 360 residues: tRNA N6-adenosine threonylcarbamoyltransferase (360 aa).

Fe cation is bound by residues H111 and H115. Residues L134 to G138, D167, G180, D184, and N279 each bind substrate. D307 contacts Fe cation.

Belongs to the KAE1 / TsaD family. Requires Fe(2+) as cofactor.

The protein resides in the cytoplasm. The catalysed reaction is L-threonylcarbamoyladenylate + adenosine(37) in tRNA = N(6)-L-threonylcarbamoyladenosine(37) in tRNA + AMP + H(+). In terms of biological role, required for the formation of a threonylcarbamoyl group on adenosine at position 37 (t(6)A37) in tRNAs that read codons beginning with adenine. Is involved in the transfer of the threonylcarbamoyl moiety of threonylcarbamoyl-AMP (TC-AMP) to the N6 group of A37, together with TsaE and TsaB. TsaD likely plays a direct catalytic role in this reaction. This chain is tRNA N6-adenosine threonylcarbamoyltransferase, found in Acaryochloris marina (strain MBIC 11017).